Here is a 260-residue protein sequence, read N- to C-terminus: Spectinomycin 9-adenylyltransferase (260 aa).

It carries out the reaction spectinomycin + ATP = 9-O-adenylylspectinomycin + diphosphate. Its function is as follows. Mediates bacterial resistance to the antibiotic spectinomycin but not streptomycin. The protein is Spectinomycin 9-adenylyltransferase (ant1) of Staphylococcus aureus (strain Mu50 / ATCC 700699).